Consider the following 426-residue polypeptide: Torsin-4A (426 aa).

Residues 41 to 60 (QPGTEPDSGTGTLGPTGSLG) form a disordered region. The segment covering 48-60 (SGTGTLGPTGSLG) has biased composition (low complexity). Phosphoserine is present on residues Ser-58 and Ser-76. Thr-84 carries the post-translational modification Phosphothreonine. Ser-101 carries the post-translational modification Phosphoserine. A helical membrane pass occupies residues 117-133 (CLLLLVAIVGFQVLNAI). ATP is bound at residue 189–196 (GPSGVGKS).

This sequence belongs to the ClpA/ClpB family. Torsin subfamily.

Its subcellular location is the membrane. The protein is Torsin-4A (Tor4a) of Mus musculus (Mouse).